The following is a 203-amino-acid chain: NADH-quinone oxidoreductase subunit C (203 aa).

This sequence belongs to the complex I 30 kDa subunit family. NDH-1 is composed of 14 different subunits. Subunits NuoB, C, D, E, F, and G constitute the peripheral sector of the complex.

It localises to the cell inner membrane. It catalyses the reaction a quinone + NADH + 5 H(+)(in) = a quinol + NAD(+) + 4 H(+)(out). In terms of biological role, NDH-1 shuttles electrons from NADH, via FMN and iron-sulfur (Fe-S) centers, to quinones in the respiratory chain. The immediate electron acceptor for the enzyme in this species is believed to be ubiquinone. Couples the redox reaction to proton translocation (for every two electrons transferred, four hydrogen ions are translocated across the cytoplasmic membrane), and thus conserves the redox energy in a proton gradient. This Verminephrobacter eiseniae (strain EF01-2) protein is NADH-quinone oxidoreductase subunit C.